Consider the following 87-residue polypeptide: Small ribosomal subunit protein bS20 (87 aa).

Positions M1–R20 are disordered.

The protein belongs to the bacterial ribosomal protein bS20 family.

Binds directly to 16S ribosomal RNA. The polypeptide is Small ribosomal subunit protein bS20 (Corynebacterium efficiens (strain DSM 44549 / YS-314 / AJ 12310 / JCM 11189 / NBRC 100395)).